Here is a 286-residue protein sequence, read N- to C-terminus: P2R1A-PPP2R2A-interacting phosphatase regulator 1 (286 aa).

Residues 1–46 (MAQEKMELDLELPAGTGASPAEGGGPGSGGLRRSNSAPLIHGLSDS) are disordered. Ser-34 carries the phosphoserine modification. The residue at position 36 (Ser-36) is a Phosphoserine; by CHEK1. Residues Ser-44, Ser-47, Ser-61, and Ser-75 each carry the phosphoserine modification. A Glycyl lysine isopeptide (Lys-Gly) (interchain with G-Cter in SUMO1) cross-link involves residue Lys-88. A phosphoserine mark is found at Ser-142 and Ser-146. Thr-148 carries the post-translational modification Phosphothreonine. The tract at residues 166 to 187 (SNGLPPSPIPSPTTRFTTRRSQ) is disordered. The segment covering 177–187 (PTTRFTTRRSQ) has biased composition (low complexity). A phosphoserine mark is found at Ser-186 and Ser-188. The disordered stretch occupies residues 238–286 (VSSDTLDGNSSSAGSSCNSPAKVSTTTDSPVSPAQAASPFIPVDELSSK). The span at 245–256 (GNSSSAGSSCNS) shows a compositional bias: low complexity. A compositionally biased stretch (polar residues) spans 258–269 (AKVSTTTDSPVS). A phosphoserine mark is found at Ser-266, Ser-269, and Ser-275.

Belongs to the FAM122 family. Interacts with PPP2CA and PPP2R1A. Interacts (via its N-terminus) with PPP2R2A; the interaction is direct and this interaction inhibits PP2A activity. The CHEK1-mediated Ser-36 phosphorylated form interacts with 14-3-3 proteins. CHEK1-mediated phosphorylation at Ser-36 negatively regulates its ability to inhibit serine/threonine-protein phosphatase 2A (PP2A) activity. Phosphorylation leads to its release from the PP2A complex and its sequestration by 14-3-3 proteins in the cytoplasm resulting in its inability to translocate to the nucleus, where it otherwise inhibits PP2A.

It is found in the nucleus. The protein localises to the cytoplasm. Its function is as follows. Acts as an inhibitor of serine/threonine-protein phosphatase 2A (PP2A) activity. Inhibits PP2A activity by blocking the substrate binding site on PPP2R2A and the active site of PPP2CA. Potentiates ubiquitin-mediated proteasomal degradation of serine/threonine-protein phosphatase 2A catalytic subunit alpha (PPP2CA). Inhibits PP2A-mediated dephosphorylation of WEE1, promoting ubiquitin-mediated proteolysis of WEE1, thereby releasing G2/M checkpoint. This is P2R1A-PPP2R2A-interacting phosphatase regulator 1 from Rattus norvegicus (Rat).